A 385-amino-acid polypeptide reads, in one-letter code: Queuine tRNA-ribosyltransferase (385 aa).

Asp-93 acts as the Proton acceptor in catalysis. Residues Asp-93–Phe-97, Asp-147, Gln-191, and Gly-218 each bind substrate. The tract at residues Gly-249–Asp-255 is RNA binding. Asp-268 functions as the Nucleophile in the catalytic mechanism. The tract at residues Thr-273–Arg-277 is RNA binding; important for wobble base 34 recognition. The Zn(2+) site is built by Cys-306, Cys-308, Cys-311, and His-337.

The protein belongs to the queuine tRNA-ribosyltransferase family. Homodimer. Within each dimer, one monomer is responsible for RNA recognition and catalysis, while the other monomer binds to the replacement base PreQ1. Zn(2+) serves as cofactor.

It catalyses the reaction 7-aminomethyl-7-carbaguanine + guanosine(34) in tRNA = 7-aminomethyl-7-carbaguanosine(34) in tRNA + guanine. Its pathway is tRNA modification; tRNA-queuosine biosynthesis. Its function is as follows. Catalyzes the base-exchange of a guanine (G) residue with the queuine precursor 7-aminomethyl-7-deazaguanine (PreQ1) at position 34 (anticodon wobble position) in tRNAs with GU(N) anticodons (tRNA-Asp, -Asn, -His and -Tyr). Catalysis occurs through a double-displacement mechanism. The nucleophile active site attacks the C1' of nucleotide 34 to detach the guanine base from the RNA, forming a covalent enzyme-RNA intermediate. The proton acceptor active site deprotonates the incoming PreQ1, allowing a nucleophilic attack on the C1' of the ribose to form the product. After dissociation, two additional enzymatic reactions on the tRNA convert PreQ1 to queuine (Q), resulting in the hypermodified nucleoside queuosine (7-(((4,5-cis-dihydroxy-2-cyclopenten-1-yl)amino)methyl)-7-deazaguanosine). This Pasteurella multocida (strain Pm70) protein is Queuine tRNA-ribosyltransferase.